A 248-amino-acid chain; its full sequence is Ubiquinone biosynthesis O-methyltransferase (248 aa).

Residues Arg-40, Gly-71, Asp-92, and Met-135 each coordinate S-adenosyl-L-methionine.

It belongs to the methyltransferase superfamily. UbiG/COQ3 family.

The enzyme catalyses a 3-demethylubiquinol + S-adenosyl-L-methionine = a ubiquinol + S-adenosyl-L-homocysteine + H(+). It catalyses the reaction a 3-(all-trans-polyprenyl)benzene-1,2-diol + S-adenosyl-L-methionine = a 2-methoxy-6-(all-trans-polyprenyl)phenol + S-adenosyl-L-homocysteine + H(+). It participates in cofactor biosynthesis; ubiquinone biosynthesis. In terms of biological role, O-methyltransferase that catalyzes the 2 O-methylation steps in the ubiquinone biosynthetic pathway. The sequence is that of Ubiquinone biosynthesis O-methyltransferase from Ruegeria pomeroyi (strain ATCC 700808 / DSM 15171 / DSS-3) (Silicibacter pomeroyi).